The following is a 2417-amino-acid chain: Protein pad-1 (2417 aa).

4 disordered regions span residues 409 to 437, 449 to 475, 994 to 1029, and 1957 to 2032; these read SSNS…DREG, SNKD…PDEE, TSTG…DDDT, and SMSN…RRDP. Low complexity-rich tracts occupy residues 456-468 and 1002-1024; these read TSVT…NASS and DPSA…VVPA. A compositionally biased stretch (polar residues) spans 1969 to 1982; that stretch reads DNPSGSTRNSTLSL. Positions 2003 to 2014 are enriched in basic and acidic residues; sequence SKSENMKIEKKS. A compositionally biased stretch (polar residues) spans 2015–2025; sequence SSNLRASIKDT.

Belongs to the DOP1 family.

May be involved in protein traffic between late Golgi and early endosomes. Essential for cell patterning during gastrulation. The polypeptide is Protein pad-1 (pad-1) (Caenorhabditis elegans).